The following is a 332-amino-acid chain: Ubiquinone biosynthesis protein COQ4, mitochondrial (332 aa).

Residues 1 to 24 (MLRLGVSRTPINRQFVGYEQRRHF) constitute a mitochondrion transit peptide. Histidine 210, aspartate 211, histidine 214, and glutamate 226 together coordinate Zn(2+).

This sequence belongs to the COQ4 family. In terms of assembly, component of a multi-subunit COQ enzyme complex, composed of at least COQ3, COQ4, COQ5, COQ6, COQ7 and COQ9. The cofactor is Zn(2+).

The protein localises to the mitochondrion inner membrane. The catalysed reaction is a 4-hydroxy-3-methoxy-5-(all-trans-polyprenyl)benzoate + H(+) = a 2-methoxy-6-(all-trans-polyprenyl)phenol + CO2. It functions in the pathway cofactor biosynthesis; ubiquinone biosynthesis. In terms of biological role, lyase that catalyzes the C1-decarboxylation of 4-hydroxy-3-methoxy-5-(all-trans-polyprenyl)benzoic acid into 2-methoxy-6-(all-trans-polyprenyl)phenol during ubiquinone biosynthesis. This is Ubiquinone biosynthesis protein COQ4, mitochondrial from Zygosaccharomyces rouxii (strain ATCC 2623 / CBS 732 / NBRC 1130 / NCYC 568 / NRRL Y-229).